Consider the following 226-residue polypeptide: Large ribosomal subunit protein uL1 (226 aa).

The protein belongs to the universal ribosomal protein uL1 family. Part of the 50S ribosomal subunit.

Its function is as follows. Binds directly to 23S rRNA. The L1 stalk is quite mobile in the ribosome, and is involved in E site tRNA release. Protein L1 is also a translational repressor protein, it controls the translation of the L11 operon by binding to its mRNA. The sequence is that of Large ribosomal subunit protein uL1 from Borreliella burgdorferi (strain ATCC 35210 / DSM 4680 / CIP 102532 / B31) (Borrelia burgdorferi).